A 209-amino-acid chain; its full sequence is High frequency lysogenization protein HflD homolog (209 aa).

This sequence belongs to the HflD family.

It localises to the cytoplasm. The protein resides in the cell inner membrane. This is High frequency lysogenization protein HflD homolog from Proteus mirabilis (strain HI4320).